Here is a 106-residue protein sequence, read N- to C-terminus: ATP-dependent Clp protease adapter protein ClpS (106 aa).

Belongs to the ClpS family. As to quaternary structure, binds to the N-terminal domain of the chaperone ClpA.

Its function is as follows. Involved in the modulation of the specificity of the ClpAP-mediated ATP-dependent protein degradation. This chain is ATP-dependent Clp protease adapter protein ClpS, found in Edwardsiella ictaluri (strain 93-146).